A 453-amino-acid chain; its full sequence is Carbamoyl phosphate synthase arginine-specific small chain (453 aa).

Residues 1-28 (MFARVFKAMPARAPAFTSVNASIQSRFM) constitute a mitochondrion transit peptide. Residues 219–406 (HVAVIDCGVK…LDSVVKYKNH (188 aa)) form the Glutamine amidotransferase type-1 domain. Cys-295 serves as the catalytic Nucleophile. Active-site residues include His-379 and Glu-381.

This sequence belongs to the CarA family. Heterodimer composed of 2 chains; the small (or glutamine) chain promotes the hydrolysis of glutamine to ammonia, which is used by the large (or ammonia) chain to synthesize carbamoyl phosphate.

Its subcellular location is the mitochondrion matrix. It catalyses the reaction hydrogencarbonate + L-glutamine + 2 ATP + H2O = carbamoyl phosphate + L-glutamate + 2 ADP + phosphate + 2 H(+). It carries out the reaction L-glutamine + H2O = L-glutamate + NH4(+). It participates in amino-acid biosynthesis; L-arginine biosynthesis; carbamoyl phosphate from bicarbonate: step 1/1. In terms of biological role, small subunit of the arginine-specific carbamoyl phosphate synthase (CPSase). CPSase catalyzes the formation of carbamoyl phosphate from the ammonia moiety of glutamine, carbonate, and phosphate donated by ATP, the first step of the arginine biosynthetic pathway. The small subunit (glutamine amidotransferase) binds and cleaves glutamine to supply the large subunit with the substrate ammonia. This Aspergillus niger (strain ATCC MYA-4892 / CBS 513.88 / FGSC A1513) protein is Carbamoyl phosphate synthase arginine-specific small chain (cpa1).